The primary structure comprises 170 residues: Small ribosomal subunit protein uS5 (170 aa).

Residues 16-79 (IEDQLVAINR…EAGKKNMISV (64 aa)) enclose the S5 DRBM domain.

This sequence belongs to the universal ribosomal protein uS5 family. As to quaternary structure, part of the 30S ribosomal subunit. Contacts proteins S4 and S8.

Functionally, with S4 and S12 plays an important role in translational accuracy. Located at the back of the 30S subunit body where it stabilizes the conformation of the head with respect to the body. This Lactobacillus delbrueckii subsp. bulgaricus (strain ATCC 11842 / DSM 20081 / BCRC 10696 / JCM 1002 / NBRC 13953 / NCIMB 11778 / NCTC 12712 / WDCM 00102 / Lb 14) protein is Small ribosomal subunit protein uS5.